Reading from the N-terminus, the 75-residue chain is Alpha-elapitoxin-Bc2c (75 aa).

A signal peptide spans 1-2 (YT). Disulfide bonds link Cys5–Cys24, Cys17–Cys45, Cys30–Cys34, Cys49–Cys60, and Cys61–Cys66.

It belongs to the three-finger toxin family. Long-chain subfamily. Type II alpha-neurotoxin sub-subfamily. Monomer in solution, homodimer in crystal state. As to expression, expressed by the venom gland.

The protein resides in the secreted. In terms of biological role, binds to muscular and neuronal nicotinic acetylcholine receptor (nAChR) and inhibits acetylcholine from binding to the receptor, thereby impairing neuromuscular and neuronal transmission. Blocks muscle type nAChR. Also binds with high affinity to alpha-7/CHRNA7 nAChRs. In addition, shows a weak inhibition of neuronal alpha-3-beta-2/CHRNA3-CHRNB2 nAChR. Selectively binds to alpha-1-delta subunit interface of the mouse muscle nicotinic acetylcholine receptor, with a 10-fold higher affinity for the adult than for the fetal receptors. In vivo, when intraperitoneally injected into mice, causes flaccid paralysis and respiratory distress, followed by death within 2-4 hours. This Bungarus candidus (Malayan krait) protein is Alpha-elapitoxin-Bc2c.